The sequence spans 360 residues: Phospho-N-acetylmuramoyl-pentapeptide-transferase (360 aa).

Helical transmembrane passes span 26 to 46 (AIVS…RMIA), 72 to 92 (PTMG…LWAY), 94 to 114 (SNPY…IGFV), 132 to 152 (WKYF…YLAG), 168 to 188 (VMPQ…VGTG), 199 to 219 (GLAI…AWAT), 236 to 256 (AGEL…FLWF), 263 to 283 (VFMG…IAVL), 288 to 308 (FLLV…ILQV), and 338 to 358 (VIVR…ATLK).

This sequence belongs to the glycosyltransferase 4 family. MraY subfamily. Requires Mg(2+) as cofactor.

The protein localises to the cell inner membrane. The enzyme catalyses UDP-N-acetyl-alpha-D-muramoyl-L-alanyl-gamma-D-glutamyl-meso-2,6-diaminopimeloyl-D-alanyl-D-alanine + di-trans,octa-cis-undecaprenyl phosphate = di-trans,octa-cis-undecaprenyl diphospho-N-acetyl-alpha-D-muramoyl-L-alanyl-D-glutamyl-meso-2,6-diaminopimeloyl-D-alanyl-D-alanine + UMP. The protein operates within cell wall biogenesis; peptidoglycan biosynthesis. In terms of biological role, catalyzes the initial step of the lipid cycle reactions in the biosynthesis of the cell wall peptidoglycan: transfers peptidoglycan precursor phospho-MurNAc-pentapeptide from UDP-MurNAc-pentapeptide onto the lipid carrier undecaprenyl phosphate, yielding undecaprenyl-pyrophosphoryl-MurNAc-pentapeptide, known as lipid I. The polypeptide is Phospho-N-acetylmuramoyl-pentapeptide-transferase (Klebsiella pneumoniae subsp. pneumoniae (strain ATCC 700721 / MGH 78578)).